The sequence spans 214 residues: Holliday junction branch migration complex subunit RuvA (214 aa).

A domain I region spans residues 1-63 (MISFLRGPVA…EDSMTLYGFA (63 aa)). Residues 64–139 (DPDEREVFEI…KLVPHGTVNG (76 aa)) are domain II. The interval 139–143 (GAPAS) is flexible linker. Residues 144–214 (PSAQWKPQVV…SAGRQVTARG (71 aa)) are domain III.

It belongs to the RuvA family. In terms of assembly, homotetramer. Forms an RuvA(8)-RuvB(12)-Holliday junction (HJ) complex. HJ DNA is sandwiched between 2 RuvA tetramers; dsDNA enters through RuvA and exits via RuvB. An RuvB hexamer assembles on each DNA strand where it exits the tetramer. Each RuvB hexamer is contacted by two RuvA subunits (via domain III) on 2 adjacent RuvB subunits; this complex drives branch migration. In the full resolvosome a probable DNA-RuvA(4)-RuvB(12)-RuvC(2) complex forms which resolves the HJ.

The protein resides in the cytoplasm. Functionally, the RuvA-RuvB-RuvC complex processes Holliday junction (HJ) DNA during genetic recombination and DNA repair, while the RuvA-RuvB complex plays an important role in the rescue of blocked DNA replication forks via replication fork reversal (RFR). RuvA specifically binds to HJ cruciform DNA, conferring on it an open structure. The RuvB hexamer acts as an ATP-dependent pump, pulling dsDNA into and through the RuvAB complex. HJ branch migration allows RuvC to scan DNA until it finds its consensus sequence, where it cleaves and resolves the cruciform DNA. In Renibacterium salmoninarum (strain ATCC 33209 / DSM 20767 / JCM 11484 / NBRC 15589 / NCIMB 2235), this protein is Holliday junction branch migration complex subunit RuvA.